Reading from the N-terminus, the 165-residue chain is Glycosyl-4,4'-diaponeurosporenoate acyltransferase (165 aa).

The signal sequence occupies residues Met-1–Leu-28. Residues Tyr-126 to Tyr-145 form a helical membrane-spanning segment.

Belongs to the acyltransferase CrtO family.

The protein localises to the cell membrane. The protein operates within carotenoid biosynthesis; staphyloxanthin biosynthesis; staphyloxanthin from farnesyl diphosphate: step 5/5. Functionally, catalyzes the acylation of glycosyl-4,4'-diaponeurosporenoate, i.e. the esterification of glucose at the C6'' position with the carboxyl group of the C(15) fatty acid 12-methyltetradecanoic acid, to yield staphyloxanthin. This is the last step in the biosynthesis of this orange pigment, present in most staphylococci strains. The sequence is that of Glycosyl-4,4'-diaponeurosporenoate acyltransferase (crtO) from Staphylococcus aureus (strain Newman).